A 657-amino-acid polypeptide reads, in one-letter code: Protein mono-ADP-ribosyltransferase TIPARP (657 aa).

Acidic residues predominate over residues Met1–Pro10. The tract at residues Met1–Asp21 is disordered. Cys39 carries the post-translational modification ADP-ribosylcysteine. Residues Lys41–Arg47 carry the Nuclear localization signal motif. The segment at Glu237 to Leu264 adopts a C3H1-type zinc-finger fold. A WWE domain is found at Ser332–Ile410. A PARP catalytic domain is found at Tyr449–Ile657.

This sequence belongs to the ARTD/PARP family. Interacts with AHR. Auto-mono-ADP-ribosylated.

It localises to the nucleus. The catalysed reaction is L-aspartyl-[protein] + NAD(+) = 4-O-(ADP-D-ribosyl)-L-aspartyl-[protein] + nicotinamide. It catalyses the reaction L-glutamyl-[protein] + NAD(+) = 5-O-(ADP-D-ribosyl)-L-glutamyl-[protein] + nicotinamide. It carries out the reaction L-cysteinyl-[protein] + NAD(+) = S-(ADP-D-ribosyl)-L-cysteinyl-[protein] + nicotinamide + H(+). With respect to regulation, ADP-ribosyltransferase activity is inhibited by PJ34; inhibition is however not specific to TIPARP and other PARP-domain containing proteins are also inhibited by PJ34. Partially inhibited by KU0058948. Its function is as follows. ADP-ribosyltransferase that mediates mono-ADP-ribosylation of glutamate, aspartate and cysteine residues on target proteins. Acts as a negative regulator of AHR by mediating mono-ADP-ribosylation of AHR, leading to inhibit transcription activator activity of AHR. The polypeptide is Protein mono-ADP-ribosyltransferase TIPARP (Homo sapiens (Human)).